A 93-amino-acid chain; its full sequence is UPF0728 protein C10orf53 homolog (93 aa).

This sequence belongs to the UPF0728 family.

This Bos taurus (Bovine) protein is UPF0728 protein C10orf53 homolog.